The following is a 166-amino-acid chain: RNA pyrophosphohydrolase (166 aa).

Residues 6–149 (GFRPNVGIIL…KRDVYRKAMM (144 aa)) form the Nudix hydrolase domain. Positions 38–59 (GGIHFGETPEQALYRELREEVG) match the Nudix box motif.

Belongs to the Nudix hydrolase family. RppH subfamily. A divalent metal cation serves as cofactor.

In terms of biological role, accelerates the degradation of transcripts by removing pyrophosphate from the 5'-end of triphosphorylated RNA, leading to a more labile monophosphorylated state that can stimulate subsequent ribonuclease cleavage. The chain is RNA pyrophosphohydrolase from Acinetobacter baylyi (strain ATCC 33305 / BD413 / ADP1).